The following is a 437-amino-acid chain: 26S proteasome regulatory subunit 4 homolog (437 aa).

Positions 1–47 are disordered; that stretch reads MGQGVSSGQDKKKKKGSNQKPKYEPPVQSKFGRKKRKGGPATAEKLP. Gly2 is lipidated: N-myristoyl glycine. Position 223-230 (223-230) interacts with ATP; that stretch reads GAPGTGKT. Residues Lys234, Lys255, and Lys290 each participate in a glycyl lysine isopeptide (Lys-Gly) (interchain with G-Cter in ubiquitin) cross-link.

Belongs to the AAA ATPase family.

Its subcellular location is the cytoplasm. It is found in the nucleus. The 26S proteasome is involved in the ATP-dependent degradation of ubiquitinated proteins. The regulatory (or ATPase) complex confers ATP dependency and substrate specificity to the 26S complex. Has ATPase activity. This Saccharomyces cerevisiae (strain ATCC 204508 / S288c) (Baker's yeast) protein is 26S proteasome regulatory subunit 4 homolog (RPT2).